We begin with the raw amino-acid sequence, 377 residues long: Homoserine O-acetyltransferase (377 aa).

An AB hydrolase-1 domain is found at 48–347; the sequence is NVVLIEHALT…PVGHDAFLTE (300 aa). S143 acts as the Nucleophile in catalysis. Substrate is bound at residue R213. Residues D311 and H341 contribute to the active site. D342 contributes to the substrate binding site.

The protein belongs to the AB hydrolase superfamily. MetX family. As to quaternary structure, homodimer.

The protein resides in the cytoplasm. The catalysed reaction is L-homoserine + acetyl-CoA = O-acetyl-L-homoserine + CoA. It functions in the pathway amino-acid biosynthesis; L-methionine biosynthesis via de novo pathway; O-acetyl-L-homoserine from L-homoserine: step 1/1. Its function is as follows. Transfers an acetyl group from acetyl-CoA to L-homoserine, forming acetyl-L-homoserine. This Corynebacterium glutamicum (strain ATCC 13032 / DSM 20300 / JCM 1318 / BCRC 11384 / CCUG 27702 / LMG 3730 / NBRC 12168 / NCIMB 10025 / NRRL B-2784 / 534) protein is Homoserine O-acetyltransferase.